Reading from the N-terminus, the 95-residue chain is Opiscorpine-1 (95 aa).

Positions 1 to 19 are cleaved as a signal peptide; that stretch reads MNNKLTALIFLGLLAIASC. One can recognise a BetaSPN-type CS-alpha/beta domain in the interval 55-95; the sequence is EFMCVANVDMTKSCDTHCQKASGEKGYCHGTKCKCGVPLSY. Disulfide bonds link C58–C82, C68–C87, and C72–C89.

This sequence belongs to the long chain scorpion toxin family. Class 3 subfamily. Expressed by the venom gland.

It localises to the secreted. In terms of biological role, the short synthetic peptide (20-54) has antimicrobial activity against the yeasts F.culmorum (IC(50)=8.8 uM) and F.oxysporum (IC(50)=10 uM), and the Gram-negative bacteria E.coli. The chain is Opiscorpine-1 from Opistophthalmus carinatus (African yellow leg scorpion).